A 354-amino-acid polypeptide reads, in one-letter code: Inactive ADP-ribosyltransferase arh2 (354 aa).

This sequence belongs to the ADP-ribosylglycohydrolase family. In terms of tissue distribution, expressed in heart (at protein level). A short form is detected in both heart and tadpole tail (at protein level).

It is found in the cytoplasm. The protein resides in the myofibril. The protein localises to the sarcomere. Functionally, required for myofibril assembly and outgrowth of the cardiac chambers in the developing heart. Appears to be catalytically inactive, showing no activity against O-acetyl-ADP-ribose. The polypeptide is Inactive ADP-ribosyltransferase arh2 (adprhl1) (Xenopus laevis (African clawed frog)).